The chain runs to 300 residues: GTPase Era (300 aa).

The Era-type G domain maps to 7 to 175 (KSGFAVMAGL…KTAVAETLPF (169 aa)). Residues 15–22 (GLPNAGKS) are G1. GTP is bound at residue 15–22 (GLPNAGKS). The G2 stretch occupies residues 41 to 45 (QMTRQ). The G3 stretch occupies residues 62-65 (DTPG). GTP-binding positions include 62-66 (DTPGF) and 124-127 (NKAD). Residues 124 to 127 (NKAD) form a G4 region. The G5 stretch occupies residues 154 to 156 (ISA). In terms of domain architecture, KH type-2 spans 198 to 283 (IREQIFNLYE…RLELEVSVEP (86 aa)).

This sequence belongs to the TRAFAC class TrmE-Era-EngA-EngB-Septin-like GTPase superfamily. Era GTPase family. Monomer.

The protein resides in the cytoplasm. Its subcellular location is the cell inner membrane. Its function is as follows. An essential GTPase that binds both GDP and GTP, with rapid nucleotide exchange. Plays a role in 16S rRNA processing and 30S ribosomal subunit biogenesis and possibly also in cell cycle regulation and energy metabolism. This is GTPase Era from Elusimicrobium minutum (strain Pei191).